Here is a 62-residue protein sequence, read N- to C-terminus: UPF0434 protein R03186 (62 aa).

This sequence belongs to the UPF0434 family.

The polypeptide is UPF0434 protein R03186 (Rhizobium meliloti (strain 1021) (Ensifer meliloti)).